Consider the following 706-residue polypeptide: Phosphatase and actin regulator 4 (706 aa).

Residues 42–67 (EVLERKISMRKPREELVKRGLLVEVP) form an RPEL 1 repeat. Disordered stretches follow at residues 65-123 (EVPE…QPCA), 196-380 (VHPR…HIPV), 385-404 (VPML…QSAS), and 459-579 (LKVP…REEW). Residues 106 to 121 (DSTGSRPKSGETTVQP) show a composition bias toward polar residues. A compositionally biased stretch (basic and acidic residues) spans 200–211 (HLSEKNSEKYRP). The span at 266-276 (DPSTRQQSSVP) shows a compositional bias: polar residues. Residues 290-299 (KQPPVPPPKP) show a composition bias toward pro residues. Acidic residues-rich tracts occupy residues 463–476 (DDDD…DESL), 508–523 (QEEE…DTDS), and 531–541 (EDDEEEEEEET). Residues 563 to 579 (GPHDSNPEFPQRSREEW) are compositionally biased toward basic and acidic residues. RPEL repeat units follow at residues 588–613 (SQLN…QKNE) and 625–650 (RRLT…RFNE).

This sequence belongs to the phosphatase and actin regulator family. As to quaternary structure, binds ppp1ca and actin.

The protein resides in the cytoplasm. Its subcellular location is the cell projection. It is found in the lamellipodium. In terms of biological role, regulator of protein phosphatase 1 (PP1) required for neural tube and optic fissure closure, and enteric neural crest cell (ENCCs) migration during development. Acts as an activator of PP1. During neural tube closure, localizes to the ventral neural tube and activates PP1, leading to down-regulate cell proliferation within cranial neural tissue and the neural retina. Also acts as a regulator of migration of enteric neural crest cells (ENCCs) by activating PP1, leading to repression of the integrin signaling through the rho/rock pathway. The sequence is that of Phosphatase and actin regulator 4 (phactr4) from Xenopus tropicalis (Western clawed frog).